Consider the following 111-residue polypeptide: uncharacterized protein (111 aa).

Positions Asn43–Ser72 are disordered. Low complexity predominate over residues Leu61 to Ser72.

This is an uncharacterized protein from Homo sapiens (Human).